Here is a 199-residue protein sequence, read N- to C-terminus: Pectinesterase inhibitor 4 (199 aa).

A signal peptide spans 1–25 (MLRFVVLSLTLMVFINSSNFPKTAA). 4 N-linked (GlcNAc...) asparagine glycosylation sites follow: asparagine 16, asparagine 33, asparagine 43, and asparagine 83. Residues cysteine 42 and cysteine 51 are joined by a disulfide bond. Cysteines 109 and 158 form a disulfide.

The protein belongs to the PMEI family. Binds reversibly to PME3 to inhibit its activity; the stability of the PME3-PMEI4 complex and the inhibition of the pectin methylesterase (PME) activity is pH-dependent, based on protonation status of amino-acids at the complex interface. As to expression, expressed in outer cell layer of roots, particularly in the root-hair zone. Expressed in roots and siliques.

Its subcellular location is the secreted. The protein localises to the extracellular space. It localises to the apoplast. In terms of biological role, pectin methylesterase (PME) inhibitor that can target the root-expressed PME17 and PME3 in a pH-dependent manner, mainly in slightly acidic conditions (pH 6.3 and 5.0) but not at pH 7.5; this processus relies on changes in the protonation of amino acids involved in intermolecular and intramolecular interactions. Regulate de-methylesterification of pectins in roots and affects root growth. The polypeptide is Pectinesterase inhibitor 4 (Arabidopsis thaliana (Mouse-ear cress)).